Consider the following 399-residue polypeptide: Nicotinate phosphoribosyltransferase (399 aa).

His224 carries the phosphohistidine; by autocatalysis modification.

This sequence belongs to the NAPRTase family. Post-translationally, transiently phosphorylated on a His residue during the reaction cycle. Phosphorylation strongly increases the affinity for substrates and increases the rate of nicotinate D-ribonucleotide production. Dephosphorylation regenerates the low-affinity form of the enzyme, leading to product release.

The catalysed reaction is nicotinate + 5-phospho-alpha-D-ribose 1-diphosphate + ATP + H2O = nicotinate beta-D-ribonucleotide + ADP + phosphate + diphosphate. Its pathway is cofactor biosynthesis; NAD(+) biosynthesis; nicotinate D-ribonucleotide from nicotinate: step 1/1. Catalyzes the synthesis of beta-nicotinate D-ribonucleotide from nicotinate and 5-phospho-D-ribose 1-phosphate at the expense of ATP. This Ectopseudomonas mendocina (strain ymp) (Pseudomonas mendocina) protein is Nicotinate phosphoribosyltransferase.